The following is a 54-amino-acid chain: uncharacterized protein (54 aa).

A signal peptide spans 1 to 13 (MLLCFHMCQRIMW).

It localises to the secreted. This is an uncharacterized protein from Saccharomyces cerevisiae (strain ATCC 204508 / S288c) (Baker's yeast).